A 161-amino-acid polypeptide reads, in one-letter code: Phosphopantetheine adenylyltransferase (161 aa).

Position 9 (S9) interacts with substrate. Residues 9 to 10 (SF) and H17 each bind ATP. Residues K41, T74, and R88 each contribute to the substrate site. Residues 89–91 (GVR), E99, and 124–130 (NSFVASS) contribute to the ATP site.

The protein belongs to the bacterial CoaD family. As to quaternary structure, homohexamer. It depends on Mg(2+) as a cofactor.

The protein resides in the cytoplasm. The enzyme catalyses (R)-4'-phosphopantetheine + ATP + H(+) = 3'-dephospho-CoA + diphosphate. It participates in cofactor biosynthesis; coenzyme A biosynthesis; CoA from (R)-pantothenate: step 4/5. Functionally, reversibly transfers an adenylyl group from ATP to 4'-phosphopantetheine, yielding dephospho-CoA (dPCoA) and pyrophosphate. This Lactobacillus acidophilus (strain ATCC 700396 / NCK56 / N2 / NCFM) protein is Phosphopantetheine adenylyltransferase.